The following is a 685-amino-acid chain: Translation factor GUF1 homolog, mitochondrial (685 aa).

The transit peptide at 1-54 directs the protein to the mitochondrion; that stretch reads MFSRLLNRGNGGVNKNITSGLLLRRTTTTTTRLSYINNSPTLSIRSFCSKSTTI. Positions 68–267 constitute a tr-type G domain; that stretch reads DRIRNFSIIA…AVIDRIPPPQ (200 aa). Residues 77–84, 160–164, and 214–217 each bind GTP; these read AHIDHGKT, DTPGH, and NKID.

Belongs to the TRAFAC class translation factor GTPase superfamily. Classic translation factor GTPase family. LepA subfamily.

The protein localises to the mitochondrion inner membrane. It carries out the reaction GTP + H2O = GDP + phosphate + H(+). Promotes mitochondrial protein synthesis. May act as a fidelity factor of the translation reaction, by catalyzing a one-codon backward translocation of tRNAs on improperly translocated ribosomes. Binds to mitochondrial ribosomes in a GTP-dependent manner. This Dictyostelium discoideum (Social amoeba) protein is Translation factor GUF1 homolog, mitochondrial (guf1).